Reading from the N-terminus, the 1213-residue chain is Genetic suppressor element 1 (1213 aa).

The segment at 1 to 154 is disordered; the sequence is MKGMSHEPKS…GSRGSSSGRE (154 aa). Residue S10 is modified to Phosphoserine. Polar residues predominate over residues 15 to 33; that stretch reads MLSTATRTTATVNPLTPSP. Composition is skewed to low complexity over residues 51-63 and 76-89; these read SAQA…FAAA and GSSL…VSSP. A phosphoserine mark is found at S84 and S95. Residues 103-114 show a composition bias toward low complexity; it reads VPMGPIIVPPGG. Asymmetric dimethylarginine is present on R305. A coiled-coil region spans residues 319–402; the sequence is HSERMSSLSA…REKELLAAKA (84 aa). The segment at 326-384 is disordered; that stretch reads LSAERLQMDEELRREREREREREREADREREKEREREQREKEREKELEREREKEREREL. Residues 331 to 384 are compositionally biased toward basic and acidic residues; the sequence is LQMDEELRREREREREREREADREREKEREREQREKEREKELEREREKEREREL. T433 is modified (phosphothreonine). K496 bears the N6-acetyllysine mark. 2 disordered regions span residues 527–579 and 630–719; these read LDLG…QHTV and SEKA…TARG. Composition is skewed to basic and acidic residues over residues 537-560 and 630-643; these read EAEH…REPP and SEKA…EATP. Positions 648–657 are enriched in pro residues; it reads QPPPPPPPPR. Over residues 681 to 700 the composition is skewed to polar residues; sequence STQTILGQQRPSLSQATSFG. K739 carries the post-translational modification N6-acetyllysine. A phosphoserine mark is found at S766, S826, S828, and S857. 3 disordered regions span residues 816–858, 898–979, and 1065–1118; these read RKRR…NNSP, LSAA…EAPG, and ELQS…PRRQ. The span at 847–858 shows a compositional bias: polar residues; the sequence is TRYSPDEMNNSP. A Phosphothreonine modification is found at T905. S907 carries the post-translational modification Phosphoserine. Residues 1065–1081 show a composition bias toward polar residues; it reads ELQSSSRVPLPQHNGQQ. Positions 1093–1197 form a coiled coil; that stretch reads QEADQDSEED…ELDHLRKCLA (105 aa). A compositionally biased stretch (acidic residues) spans 1095–1112; that stretch reads ADQDSEEDSEEDSEEEAE. S1099 bears the Phosphoserine mark.

In terms of assembly, may be a component of a BHC histone deacetylase complex that contains HDAC1, HDAC2, HMG20B/BRAF35, KDM1A, RCOR1/CoREST, PHF21A/BHC80, ZMYM2, ZNF217, ZMYM3, GSE1 and GTF2I.

The polypeptide is Genetic suppressor element 1 (Gse1) (Mus musculus (Mouse)).